Consider the following 483-residue polypeptide: Glutamate--tRNA ligase (483 aa).

The short motif at Pro-11–Asn-21 is the 'HIGH' region element. Residues Lys-252–Arg-256 carry the 'KMSKS' region motif. Lys-255 serves as a coordination point for ATP.

Belongs to the class-I aminoacyl-tRNA synthetase family. Glutamate--tRNA ligase type 1 subfamily. Monomer.

The protein resides in the cytoplasm. The catalysed reaction is tRNA(Glu) + L-glutamate + ATP = L-glutamyl-tRNA(Glu) + AMP + diphosphate. Its function is as follows. Catalyzes the attachment of glutamate to tRNA(Glu) in a two-step reaction: glutamate is first activated by ATP to form Glu-AMP and then transferred to the acceptor end of tRNA(Glu). The sequence is that of Glutamate--tRNA ligase from Bacillus velezensis (strain DSM 23117 / BGSC 10A6 / LMG 26770 / FZB42) (Bacillus amyloliquefaciens subsp. plantarum).